The chain runs to 333 residues: Holliday junction branch migration complex subunit RuvB (333 aa).

The interval 1–182 is large ATPase domain (RuvB-L); it reads MDERLVSGSA…FGVISRLEYY (182 aa). ATP is bound by residues Leu21, Arg22, Gly63, Lys66, Thr67, Thr68, 129–131, Arg172, Tyr182, and Arg219; that span reads EDY. Thr67 serves as a coordination point for Mg(2+). The segment at 183–253 is small ATPAse domain (RuvB-S); the sequence is QVDQLAQIIE…LAVEALERLQ (71 aa). The tract at residues 256–333 is head domain (RuvB-H); it reads RLGLDHIDHK…AHLGMEVPKR (78 aa). 2 residues coordinate DNA: Arg311 and Arg316.

It belongs to the RuvB family. As to quaternary structure, homohexamer. Forms an RuvA(8)-RuvB(12)-Holliday junction (HJ) complex. HJ DNA is sandwiched between 2 RuvA tetramers; dsDNA enters through RuvA and exits via RuvB. An RuvB hexamer assembles on each DNA strand where it exits the tetramer. Each RuvB hexamer is contacted by two RuvA subunits (via domain III) on 2 adjacent RuvB subunits; this complex drives branch migration. In the full resolvosome a probable DNA-RuvA(4)-RuvB(12)-RuvC(2) complex forms which resolves the HJ.

The protein resides in the cytoplasm. It carries out the reaction ATP + H2O = ADP + phosphate + H(+). Its function is as follows. The RuvA-RuvB-RuvC complex processes Holliday junction (HJ) DNA during genetic recombination and DNA repair, while the RuvA-RuvB complex plays an important role in the rescue of blocked DNA replication forks via replication fork reversal (RFR). RuvA specifically binds to HJ cruciform DNA, conferring on it an open structure. The RuvB hexamer acts as an ATP-dependent pump, pulling dsDNA into and through the RuvAB complex. RuvB forms 2 homohexamers on either side of HJ DNA bound by 1 or 2 RuvA tetramers; 4 subunits per hexamer contact DNA at a time. Coordinated motions by a converter formed by DNA-disengaged RuvB subunits stimulates ATP hydrolysis and nucleotide exchange. Immobilization of the converter enables RuvB to convert the ATP-contained energy into a lever motion, pulling 2 nucleotides of DNA out of the RuvA tetramer per ATP hydrolyzed, thus driving DNA branch migration. The RuvB motors rotate together with the DNA substrate, which together with the progressing nucleotide cycle form the mechanistic basis for DNA recombination by continuous HJ branch migration. Branch migration allows RuvC to scan DNA until it finds its consensus sequence, where it cleaves and resolves cruciform DNA. In Geobacillus thermodenitrificans (strain NG80-2), this protein is Holliday junction branch migration complex subunit RuvB.